The chain runs to 445 residues: MREIVHIQAGQCGNQIGAKFWEVISDEHGIDPSGTYCGDSDLQLERVDVFYNEATGGRYVPRAILMDLEPGTMDSVRAGPFGQLFRPDNFVFGQTGAGNNWAKGHYTEGAELIDAVLDVVRKEAEGCDCLQGFQITHSLGGGTGSGMGTLLISKIREEYPDRIMETFSVFPSPKVSDTVVEPYNATLSVHQLVENADEVQVIDNEALYDICFRTLKLTTPTYGDLNHLVSAAMSGVTCSLRFPGQLNSDLRKLAVNLIPFPRLHFFMIGFAPLTSRGSQQYRALTVPELTQQMFDAKNMMCASDPRHGRYLTACAMFRGRMSTKEVDEQMLNVQNKNSSYFVEWIPHNTKSSVCDIPPKGLKMAVTFVGNSTAIQEMFKRVSDQFTAMFRRKAFLHWYTGEGMDEMEFTEAESNMNDLVSEYQQYQDATAEEEGEFEEEEGDVEA.

Positions 11, 69, 138, 142, 143, 144, 204, and 226 each coordinate GTP. Glutamate 69 contacts Mg(2+). The disordered stretch occupies residues 426-445 (QDATAEEEGEFEEEEGDVEA). Over residues 429–445 (TAEEEGEFEEEEGDVEA) the composition is skewed to acidic residues.

This sequence belongs to the tubulin family. In terms of assembly, dimer of alpha and beta chains. A typical microtubule is a hollow water-filled tube with an outer diameter of 25 nm and an inner diameter of 15 nM. Alpha-beta heterodimers associate head-to-tail to form protofilaments running lengthwise along the microtubule wall with the beta-tubulin subunit facing the microtubule plus end conferring a structural polarity. Microtubules usually have 13 protofilaments but different protofilament numbers can be found in some organisms and specialized cells. Interacts with DCX/apicortin; the interaction stabilizes microtubule assembly. Requires Mg(2+) as cofactor.

Its subcellular location is the cytoplasm. The protein localises to the cytoskeleton. Its function is as follows. Tubulin is the major constituent of microtubules, a cylinder consisting of laterally associated linear protofilaments composed of alpha- and beta-tubulin heterodimers. Microtubules grow by the addition of GTP-tubulin dimers to the microtubule end, where a stabilizing cap forms. Below the cap, tubulin dimers are in GDP-bound state, owing to GTPase activity of alpha-tubulin. The sequence is that of Tubulin beta chain from Plasmodium falciparum (isolate 3D7).